Here is a 1016-residue protein sequence, read N- to C-terminus: UvrABC system protein A (1016 aa).

Residue 32-39 (GVSGSGKS) coordinates ATP. A C4-type zinc finger spans residues 259–286 (CPEHGSVLEELEPRSFSFNSPYGACGDC). ABC transporter domains are found at residues 315-627 (WTKK…KNSL) and 647-975 (GNGK…EYLR). 679-686 (GPSGSGKS) lines the ATP pocket. The C4-type zinc-finger motif lies at 778 to 804 (CEHCKGDGVMKIEMNFLPDIYVPCEVC). The interval 984–1016 (EPRARGEKAEKPAKAKAPAKKRTKKQTELVEAD) is disordered. Basic and acidic residues predominate over residues 985–996 (PRARGEKAEKPA).

Belongs to the ABC transporter superfamily. UvrA family. Forms a heterotetramer with UvrB during the search for lesions.

It is found in the cytoplasm. The UvrABC repair system catalyzes the recognition and processing of DNA lesions. UvrA is an ATPase and a DNA-binding protein. A damage recognition complex composed of 2 UvrA and 2 UvrB subunits scans DNA for abnormalities. When the presence of a lesion has been verified by UvrB, the UvrA molecules dissociate. The chain is UvrABC system protein A from Deinococcus radiodurans (strain ATCC 13939 / DSM 20539 / JCM 16871 / CCUG 27074 / LMG 4051 / NBRC 15346 / NCIMB 9279 / VKM B-1422 / R1).